Reading from the N-terminus, the 407-residue chain is MTGRVCVLVMDSFGIGASLDAARYGDAGANTLVHIYEACKRGECDIEGVRKGPLMLPNLAGKGLYHAAMASSGLSFIDLATLAIPSGYYGYAVEQSLGKDTPSGHWEMAGVPVTFEWGYFPDKPYCFPEELISEFIKQCNLPGVLGEKHASGTIIIDELGEKHIRTGKPIVYTSADSVFQIAAHEEAFGLQRLYDICKIARNLVDKYQIGRVIARPFTGKPGSFKRTGNRKDYATPPPEKTLLDFLKEDGREVIAIGKIADIYAHQGVTQEIKADGNMALFDATLSAMKTAPQGSLVFTNFVDFDSSYGHRRDIAGYAHALEQFDARLPELDALLQPDDMVFIAADHGCDPTFPGSDHTREHIPVLVFGPQVNSKFIGRRDCFADIGQSIAEHLQLSSPLAHGVSFL.

Positions 11, 305, 310, 346, 347, and 358 each coordinate Mn(2+).

This sequence belongs to the phosphopentomutase family. It depends on Mn(2+) as a cofactor.

It is found in the cytoplasm. The catalysed reaction is 2-deoxy-alpha-D-ribose 1-phosphate = 2-deoxy-D-ribose 5-phosphate. It carries out the reaction alpha-D-ribose 1-phosphate = D-ribose 5-phosphate. It participates in carbohydrate degradation; 2-deoxy-D-ribose 1-phosphate degradation; D-glyceraldehyde 3-phosphate and acetaldehyde from 2-deoxy-alpha-D-ribose 1-phosphate: step 1/2. Functionally, isomerase that catalyzes the conversion of deoxy-ribose 1-phosphate (dRib-1-P) and ribose 1-phosphate (Rib-1-P) to deoxy-ribose 5-phosphate (dRib-5-P) and ribose 5-phosphate (Rib-5-P), respectively. The sequence is that of Phosphopentomutase from Legionella pneumophila subsp. pneumophila (strain Philadelphia 1 / ATCC 33152 / DSM 7513).